Here is a 232-residue protein sequence, read N- to C-terminus: UPF0758 protein BH3032 (232 aa).

One can recognise an MPN domain in the interval 107 to 229 (VIRTPEDVSR…FVSLKEKGHL (123 aa)). Zn(2+)-binding residues include H178, H180, and D191. The short motif at 178–191 (HNHPSGDPTPSRED) is the JAMM motif element.

This sequence belongs to the UPF0758 family.

The chain is UPF0758 protein BH3032 from Halalkalibacterium halodurans (strain ATCC BAA-125 / DSM 18197 / FERM 7344 / JCM 9153 / C-125) (Bacillus halodurans).